The sequence spans 123 residues: MLQGSSQHSGRDAESQALRHLQQHGLRLLAQNWLCKRGELDLVMLDGDTVVFVEVRYRKHTQWGGALGSIDGRKRQKLILAAQLFLQSESRWSSHPCRFDVVAIDGASGAEARLNWLRNAFDS.

It belongs to the UPF0102 family.

The protein is UPF0102 protein PFL_5073 of Pseudomonas fluorescens (strain ATCC BAA-477 / NRRL B-23932 / Pf-5).